We begin with the raw amino-acid sequence, 206 residues long: LexA repressor (206 aa).

Residues 28 to 48 (VREICNAVGLSSTSTVHGHLS) constitute a DNA-binding region (H-T-H motif). Active-site for autocatalytic cleavage activity residues include S128 and K166.

The protein belongs to the peptidase S24 family. Homodimer.

It carries out the reaction Hydrolysis of Ala-|-Gly bond in repressor LexA.. Functionally, represses a number of genes involved in the response to DNA damage (SOS response), including recA and lexA. In the presence of single-stranded DNA, RecA interacts with LexA causing an autocatalytic cleavage which disrupts the DNA-binding part of LexA, leading to derepression of the SOS regulon and eventually DNA repair. This chain is LexA repressor, found in Ligilactobacillus salivarius (strain UCC118) (Lactobacillus salivarius).